The sequence spans 483 residues: ATP synthase subunit beta (483 aa).

162–169 contributes to the ATP binding site; it reads GGAGVGKT.

Belongs to the ATPase alpha/beta chains family. In terms of assembly, F-type ATPases have 2 components, CF(1) - the catalytic core - and CF(0) - the membrane proton channel. CF(1) has five subunits: alpha(3), beta(3), gamma(1), delta(1), epsilon(1). CF(0) has four main subunits: a(1), b(1), b'(1) and c(9-12).

Its subcellular location is the cellular thylakoid membrane. It catalyses the reaction ATP + H2O + 4 H(+)(in) = ADP + phosphate + 5 H(+)(out). Functionally, produces ATP from ADP in the presence of a proton gradient across the membrane. The catalytic sites are hosted primarily by the beta subunits. This is ATP synthase subunit beta from Rippkaea orientalis (strain PCC 8801 / RF-1) (Cyanothece sp. (strain PCC 8801)).